Here is a 122-residue protein sequence, read N- to C-terminus: Large ribosomal subunit protein uL14 (122 aa).

Belongs to the universal ribosomal protein uL14 family. Part of the 50S ribosomal subunit. Forms a cluster with proteins L3 and L19. In the 70S ribosome, L14 and L19 interact and together make contacts with the 16S rRNA in bridges B5 and B8.

In terms of biological role, binds to 23S rRNA. Forms part of two intersubunit bridges in the 70S ribosome. This Campylobacter hominis (strain ATCC BAA-381 / DSM 21671 / CCUG 45161 / LMG 19568 / NCTC 13146 / CH001A) protein is Large ribosomal subunit protein uL14.